The primary structure comprises 148 residues: F-box protein At3g55900 (148 aa).

The F-box domain occupies 9-59 (CRNLSELPQELLYKILGLLPTRNVVSTSLISHQRRSQFHWMERLKFRYPRL).

The polypeptide is F-box protein At3g55900 (Arabidopsis thaliana (Mouse-ear cress)).